The following is a 300-amino-acid chain: tRNA dimethylallyltransferase (300 aa).

ATP is bound at residue 11 to 18 (GPTAVGKS). Residue 13–18 (TAVGKS) participates in substrate binding. An interaction with substrate tRNA region spans residues 35–38 (DSVQ).

The protein belongs to the IPP transferase family. In terms of assembly, monomer. It depends on Mg(2+) as a cofactor.

The catalysed reaction is adenosine(37) in tRNA + dimethylallyl diphosphate = N(6)-dimethylallyladenosine(37) in tRNA + diphosphate. Functionally, catalyzes the transfer of a dimethylallyl group onto the adenine at position 37 in tRNAs that read codons beginning with uridine, leading to the formation of N6-(dimethylallyl)adenosine (i(6)A). This Borrelia hermsii (strain HS1 / DAH) protein is tRNA dimethylallyltransferase.